A 1359-amino-acid polypeptide reads, in one-letter code: Transcriptional regulator ATRX homolog (1359 aa).

A disordered region spans residues 1-402; it reads MRVGVSESED…RAEKERRKRL (402 aa). A compositionally biased stretch (basic and acidic residues) spans 11–49; that stretch reads SDGHVIEDEDLEMARQIENERKEKRAQKLKEKREREGKP. Basic residues predominate over residues 50-61; that stretch reads PPKKRPAKKRKA. A compositionally biased stretch (acidic residues) spans 64-73; that stretch reads SEEDDDDEEE. 6 stretches are compositionally biased toward basic residues: residues 77–86, 103–123, 139–149, 165–177, 194–204, and 219–229; these read KSSKKSRKRA, KSKS…KKRT, KSKKKSKKTKK, VKKS…KSVK, KKSKKGLKKKA, and KKSKKKSKKVV. A compositionally biased stretch (acidic residues) spans 257-271; that stretch reads ESSESEKSDEEEEEK. Basic and acidic residues predominate over residues 321-336; that stretch reads KDQKSESEASDVEEKV. Positions 347–357 are enriched in low complexity; sequence SESGSDSSEGS. Residues 362-376 show a composition bias toward basic residues; that stretch reads RKSKKKEKPEKKKKG. The span at 383-397 shows a compositional bias: basic and acidic residues; the sequence is KLQKETIDAERAEKE. A Helicase ATP-binding domain is found at 483–685; the sequence is DRLDTEGSGG…HCMVNFVKPG (203 aa). 496–503 is an ATP binding site; the sequence is HCMGLGKT. Residues 636 to 639 carry the DEAH box motif; sequence DEAH. The interval 809-891 is disordered; it reads RVMREDAEEE…NSDDEDEEDG (83 aa). Residues 814 to 832 are compositionally biased toward acidic residues; the sequence is DAEEEADFIDDGDGSESES. Positions 833-847 are enriched in low complexity; sequence EGSFKSGSESDSGKS. Residues 951 to 1134 enclose the Helicase C-terminal domain; sequence LLVEIIKKCE…EAQIQRHYLG (184 aa).

This sequence belongs to the SNF2/RAD54 helicase family.

Its subcellular location is the nucleus. The enzyme catalyses ATP + H2O = ADP + phosphate + H(+). Its function is as follows. Required for embryonic development and gonadogenesis. Also, functions redundantly with the transcriptional repressor lin-35 to regulate somatic gonad development. In Caenorhabditis elegans, this protein is Transcriptional regulator ATRX homolog.